A 485-amino-acid chain; its full sequence is Probable aspartic-type endopeptidase opsB (485 aa).

The N-terminal stretch at 1 to 20 (MRHIFSLLSIVCLMVKHGAC) is a signal peptide. In terms of domain architecture, Peptidase A1 spans 69 to 397 (YFCNVTLGTP…DIANNEISIA (329 aa)). A glycan (N-linked (GlcNAc...) asparagine) is linked at asparagine 72. Residue aspartate 87 is part of the active site. Residues asparagine 99, asparagine 107, asparagine 111, and asparagine 132 are each glycosylated (N-linked (GlcNAc...) asparagine). Residue aspartate 285 is part of the active site. N-linked (GlcNAc...) asparagine glycans are attached at residues asparagine 328, asparagine 337, and asparagine 402. Serine 461 carries GPI-anchor amidated serine lipidation. Positions 462–485 (AGVARADKQYLAIALIAVWFVLGL) are cleaved as a propeptide — removed in mature form.

It belongs to the peptidase A1 family.

The protein localises to the cell membrane. Its function is as follows. Probable GPI-anchored aspartic-type endopeptidase which contributes to virulence. The protein is Probable aspartic-type endopeptidase opsB (opsB) of Aspergillus fumigatus (strain ATCC MYA-4609 / CBS 101355 / FGSC A1100 / Af293) (Neosartorya fumigata).